Reading from the N-terminus, the 363-residue chain is uncharacterized protein (363 aa).

This sequence belongs to the TelA family.

This is an uncharacterized protein from Bacillus subtilis (strain 168).